We begin with the raw amino-acid sequence, 231 residues long: Protein virC1 (231 aa).

This chain is Protein virC1 (virC1), found in Rhizobium radiobacter (Agrobacterium tumefaciens).